We begin with the raw amino-acid sequence, 711 residues long: Long-chain-fatty-acid--CoA ligase 4 (711 aa).

A helical; Signal-anchor for type III membrane protein transmembrane segment spans residues 8-28 (LTIILLPVHLLITIYSALIFI). Residues 29–711 (PWYFLTNAKK…KDIERMYGGK (683 aa)) lie on the Cytoplasmic side of the membrane. Ser-447 carries the post-translational modification Phosphoserine.

The protein belongs to the ATP-dependent AMP-binding enzyme family. Requires Mg(2+) as cofactor. Abundant in steroidogenic tissues, also found in the kidney, brain and liver.

Its subcellular location is the mitochondrion outer membrane. It is found in the peroxisome membrane. The protein localises to the microsome membrane. The protein resides in the endoplasmic reticulum membrane. It localises to the cell membrane. The catalysed reaction is a long-chain fatty acid + ATP + CoA = a long-chain fatty acyl-CoA + AMP + diphosphate. It catalyses the reaction (5Z,8Z,11Z,14Z)-eicosatetraenoate + ATP + CoA = (5Z,8Z,11Z,14Z)-eicosatetraenoyl-CoA + AMP + diphosphate. It carries out the reaction 15-hydroxy-(5Z,8Z,11Z,13E)-eicosatetraenoate + ATP + CoA = 15-hydroxy-(5Z,8Z,11Z,13E)-eicosatetraenoyl-CoA + AMP + diphosphate. The enzyme catalyses 12-hydroxy-(5Z,8Z,10E,14Z)-eicosatetraenoate + ATP + CoA = 12-hydroxy-(5Z,8Z,10E,14Z)-eicosatetraenoyl-CoA + AMP + diphosphate. The catalysed reaction is 5-hydroxy-(6E,8Z,11Z,14Z)-eicosatetraenoate + ATP + CoA = 5-hydroxy-(6E,8Z,11Z,14Z)-eicosatetraenoyl-CoA + AMP + diphosphate. It catalyses the reaction 5,6-epoxy-(8Z,11Z,14Z)-eicosatrienoate + ATP + CoA = 5,6-epoxy-(8Z,11Z,14Z)-eicosatrienoyl-CoA + AMP + diphosphate. It carries out the reaction 14,15-epoxy-(5Z,8Z,11Z)-eicosatrienoate + ATP + CoA = 14,15-epoxy-(5Z,8Z,11Z)-eicosatrienoyl-CoA + AMP + diphosphate. The enzyme catalyses 11,12-epoxy-(5Z,8Z,14Z)-eicosatrienoate + ATP + CoA = 11,12-epoxy-(5Z,8Z,14Z)-eicosatrienoyl-CoA + AMP + diphosphate. The catalysed reaction is 8,9-epoxy-(5Z,11Z,14Z)-eicosatrienoate + ATP + CoA = 8,9-epoxy-(5Z,11Z,14Z)-eicosatrienoyl-CoA + AMP + diphosphate. It catalyses the reaction hexadecanoate + ATP + CoA = hexadecanoyl-CoA + AMP + diphosphate. It carries out the reaction (E)-hexadec-2-enoate + ATP + CoA = (2E)-hexadecenoyl-CoA + AMP + diphosphate. With respect to regulation, both triacsin C and rosiglitazone inhibit arachidonoyl-CoA ligase activity. Its function is as follows. Catalyzes the conversion of long-chain fatty acids to their active form acyl-CoA for both synthesis of cellular lipids, and degradation via beta-oxidation. Preferentially activates arachidonate and eicosapentaenoate as substrates. Preferentially activates 8,9-EET &gt; 14,15-EET &gt; 5,6-EET &gt; 11,12-EET. Modulates glucose-stimulated insulin secretion by regulating the levels of unesterified EETs. Modulates prostaglandin E2 secretion. The polypeptide is Long-chain-fatty-acid--CoA ligase 4 (Acsl4) (Mus musculus (Mouse)).